We begin with the raw amino-acid sequence, 374 residues long: N-acetyldiaminopimelate deacetylase (374 aa).

Asp-69 is an active-site residue. Residue Glu-128 is the Proton acceptor of the active site.

Belongs to the peptidase M20A family. N-acetyldiaminopimelate deacetylase subfamily.

It catalyses the reaction N-acetyl-(2S,6S)-2,6-diaminopimelate + H2O = (2S,6S)-2,6-diaminopimelate + acetate. Its pathway is amino-acid biosynthesis; L-lysine biosynthesis via DAP pathway; LL-2,6-diaminopimelate from (S)-tetrahydrodipicolinate (acetylase route): step 3/3. Catalyzes the conversion of N-acetyl-diaminopimelate to diaminopimelate and acetate. This Bacillus velezensis (strain DSM 23117 / BGSC 10A6 / LMG 26770 / FZB42) (Bacillus amyloliquefaciens subsp. plantarum) protein is N-acetyldiaminopimelate deacetylase.